The primary structure comprises 67 residues: ATP synthase F(0) complex subunit 8 (67 aa).

The chain crosses the membrane as a helical span at residues 8–24 (TWLIMISSMILTLFITF). An N6-acetyllysine; alternate modification is found at Lys-54. At Lys-54 the chain carries N6-succinyllysine; alternate. The residue at position 57 (Lys-57) is an N6-acetyllysine.

It belongs to the ATPase protein 8 family. As to quaternary structure, component of the ATP synthase complex composed at least of ATP5F1A/subunit alpha, ATP5F1B/subunit beta, ATP5MC1/subunit c (homooctomer), MT-ATP6/subunit a, MT-ATP8/subunit 8, ATP5ME/subunit e, ATP5MF/subunit f, ATP5MG/subunit g, ATP5MK/subunit k, ATP5MJ/subunit j, ATP5F1C/subunit gamma, ATP5F1D/subunit delta, ATP5F1E/subunit epsilon, ATP5PF/subunit F6, ATP5PB/subunit b, ATP5PD/subunit d, ATP5PO/subunit OSCP. ATP synthase complex consists of a soluble F(1) head domain (subunits alpha(3) and beta(3)) - the catalytic core - and a membrane F(0) domain - the membrane proton channel (subunits c, a, 8, e, f, g, k and j). These two domains are linked by a central stalk (subunits gamma, delta, and epsilon) rotating inside the F1 region and a stationary peripheral stalk (subunits F6, b, d, and OSCP). Interacts with PRICKLE3.

Its subcellular location is the mitochondrion membrane. Subunit 8, of the mitochondrial membrane ATP synthase complex (F(1)F(0) ATP synthase or Complex V) that produces ATP from ADP in the presence of a proton gradient across the membrane which is generated by electron transport complexes of the respiratory chain. ATP synthase complex consist of a soluble F(1) head domain - the catalytic core - and a membrane F(1) domain - the membrane proton channel. These two domains are linked by a central stalk rotating inside the F(1) region and a stationary peripheral stalk. During catalysis, ATP synthesis in the catalytic domain of F(1) is coupled via a rotary mechanism of the central stalk subunits to proton translocation. In vivo, can only synthesize ATP although its ATP hydrolase activity can be activated artificially in vitro. Part of the complex F(0) domain. This is ATP synthase F(0) complex subunit 8 from Halichoerus grypus (Gray seal).